We begin with the raw amino-acid sequence, 2211 residues long: Nonribosomal peptide synthetase 13 (2211 aa).

Residues Thr-76–Pro-475 form an adenylation 1 region. Positions Pro-594–Gln-671 constitute a Carrier 1 domain. Position 631 is an O-(pantetheine 4'-phosphoryl)serine (Ser-631). Positions Glu-710–Val-975 are condensation 1. Residues Thr-1169–Arg-1563 form an adenylation 2 region. Residues Pro-1677–Ala-1756 form the Carrier 2 domain. Ser-1714 carries the post-translational modification O-(pantetheine 4'-phosphoryl)serine. The condensation 2 stretch occupies residues His-1814–Ser-2069.

The protein belongs to the NRP synthetase family.

It carries out the reaction L-proline + L-tryptophan + 2 ATP = brevianamide F + 2 AMP + 2 diphosphate + 2 H(+). The protein operates within mycotoxin biosynthesis. Nonribosomal peptide synthetase; part of the gene cluster that mediates the biosynthesis of fumitremorgins, indole alkaloids that carry not only intriguing chemical structures, but also interesting biological and pharmacological activities. The biosynthesis of fumitremorgin-type alkaloids begins by condensation of the two amino acids L-tryptophan and L-proline to brevianamide F, catalyzed by the non-ribosomal peptide synthetase ftmA. Brevianamide F is then prenylated by the prenyltransferase ftmPT1/ftmB in the presence of dimethylallyl diphosphate, resulting in the formation of tryprostatin B. The three cytochrome P450 monooxygenases, ftmP450-1/ftmC, ftmP450-2/ftmE and ftmP450-3/FtmG, are responsible for the conversion of tryprostatin B to 6-hydroxytryprostatin B, tryprostatin A to fumitremorgin C and fumitremorgin C to 12,13-dihydroxyfumitremorgin C, respectively. The putative methyltransferase ftmMT/ftmD is expected for the conversion of 6-hydroxytryprostatin B to tryprostatin A. FtmPT2/FtmH catalyzes the prenylation of 12,13-dihydroxyfumitre-morgin C in the presence of dimethylallyl diphosphate, resulting in the formation of fumitremorgin B. Fumitremorgin B is further converted to verruculogen by ftmOx1/ftmF via the insertion of an endoperoxide bond between the two prenyl moieties. In some fungal species, verruculogen is further converted to fumitremorgin A, but the enzymes involved in this step have not been identified yet. The chain is Nonribosomal peptide synthetase 13 from Aspergillus fumigatus (Neosartorya fumigata).